A 269-amino-acid chain; its full sequence is 4-hydroxy-tetrahydrodipicolinate reductase (269 aa).

Residues 9 to 14 (GCAGKM), Asp-35, 102 to 104 (GTT), and 128 to 131 (APNF) each bind NAD(+). His-158 acts as the Proton donor/acceptor in catalysis. His-159 provides a ligand contact to (S)-2,3,4,5-tetrahydrodipicolinate. Lys-162 serves as the catalytic Proton donor. A (S)-2,3,4,5-tetrahydrodipicolinate-binding site is contributed by 168-169 (GT).

This sequence belongs to the DapB family.

The protein resides in the cytoplasm. It catalyses the reaction (S)-2,3,4,5-tetrahydrodipicolinate + NAD(+) + H2O = (2S,4S)-4-hydroxy-2,3,4,5-tetrahydrodipicolinate + NADH + H(+). The catalysed reaction is (S)-2,3,4,5-tetrahydrodipicolinate + NADP(+) + H2O = (2S,4S)-4-hydroxy-2,3,4,5-tetrahydrodipicolinate + NADPH + H(+). Its pathway is amino-acid biosynthesis; L-lysine biosynthesis via DAP pathway; (S)-tetrahydrodipicolinate from L-aspartate: step 4/4. In terms of biological role, catalyzes the conversion of 4-hydroxy-tetrahydrodipicolinate (HTPA) to tetrahydrodipicolinate. The polypeptide is 4-hydroxy-tetrahydrodipicolinate reductase (Gloeobacter violaceus (strain ATCC 29082 / PCC 7421)).